The chain runs to 92 residues: Phospholemman (92 aa).

The first 20 residues, 1–20, serve as a signal peptide directing secretion; sequence MAYLHHTLLVCMGLLAMANA. Residues 22 to 35 are Extracellular-facing; it reads APQEQDPFTYDYQS. A helical transmembrane segment spans residues 36–56; that stretch reads LRIGGLIIAGILFILGILIIL. Residues 57 to 92 lie on the Cytoplasmic side of the membrane; sequence KRGAWERFDTARRTGEPDEEEGTFRSSIRRLSTRRR. Residues 67–92 form a disordered region; the sequence is ARRTGEPDEEEGTFRSSIRRLSTRRR. The residue at position 79 (Thr79) is a Phosphothreonine. At Ser82 the chain carries Phosphoserine. The residue at position 83 (Ser83) is a Phosphoserine; by PKA and PKC. Basic residues predominate over residues 83 to 92; that stretch reads SIRRLSTRRR. Ser88 carries the post-translational modification Phosphoserine; by PKA. Phosphothreonine; by PKC is present on Thr89.

The protein belongs to the FXYD family. Homotetramer. Monomer. Regulatory subunit of the sodium/potassium-transporting ATPase (NKA) which is composed of a catalytic alpha subunit, a non-catalytic beta subunit and an additional regulatory subunit. The monomeric form associates with NKA while the oligomeric form does not. Interacts with the catalytic alpha-1 subunit ATP1A1. Also interacts with the catalytic alpha-2 and alpha-3 subunits ATP1A2 and ATP1A3. Very little interaction with ATP1A1, ATP1A2 or ATP1A3 when phosphorylated at Ser-83. Interacts with the non-catalytic beta-1 subunit ATP1B1. Oxidative stress decreases interaction with ATP1A1 but increases interaction with ATP1B1. Major plasma membrane substrate for cAMP-dependent protein kinase (PKA) and protein kinase C (PKC) in several different tissues. Phosphorylated in response to insulin and adrenergic stimulation. Phosphorylation at Ser-88 stimulates sodium/potassium-transporting ATPase activity while the unphosphorylated form inhibits sodium/potassium-transporting ATPase activity. Phosphorylation increases tetramerization, decreases binding to ATP1A1 and reduces inhibition of ATP1A1 activity. Phosphorylation at Ser-83 leads to greatly reduced interaction with ATP1A1, ATP1A2 and ATP1A3. May be phosphorylated by DMPK. Post-translationally, palmitoylation increases half-life and stability and is enhanced upon phosphorylation at Ser-88 by PKA. In terms of processing, glutathionylated. In terms of tissue distribution, expressed in ventricular myocytes (at protein level).

It localises to the cell membrane. The protein resides in the sarcolemma. It is found in the apical cell membrane. Its subcellular location is the membrane. The protein localises to the caveola. It localises to the T-tubule. Functionally, associates with and regulates the activity of the sodium/potassium-transporting ATPase (NKA) which transports Na(+) out of the cell and K(+) into the cell. Inhibits NKA activity in its unphosphorylated state and stimulates activity when phosphorylated. Reduces glutathionylation of the NKA beta-1 subunit ATP1B1, thus reversing glutathionylation-mediated inhibition of ATP1B1. Contributes to female sexual development by maintaining the excitability of neurons which secrete gonadotropin-releasing hormone. This chain is Phospholemman, found in Oryctolagus cuniculus (Rabbit).